Here is a 664-residue protein sequence, read N- to C-terminus: Glycine--tRNA ligase beta subunit (664 aa).

It belongs to the class-II aminoacyl-tRNA synthetase family. Tetramer of two alpha and two beta subunits.

It is found in the cytoplasm. It catalyses the reaction tRNA(Gly) + glycine + ATP = glycyl-tRNA(Gly) + AMP + diphosphate. The sequence is that of Glycine--tRNA ligase beta subunit from Rickettsia felis (strain ATCC VR-1525 / URRWXCal2) (Rickettsia azadi).